We begin with the raw amino-acid sequence, 372 residues long: L-selectin (372 aa).

An N-terminal signal peptide occupies residues 1–28 (MIFPRKCQSTQRDLWNIFKLWGWTMLCC). The propeptide occupies 29-38 (DFLAHHGTDC). Residues 39-332 (WTYHYSENPM…FSMIKEGDYN (294 aa)) lie on the Extracellular side of the membrane. The region spanning 55 to 155 (RFCRENYTDL…ACHKPKAALC (101 aa)) is the C-type lectin domain. Cystine bridges form between Cys-57–Cys-155, Cys-128–Cys-147, Cys-128–Cys-160, Cys-160–Cys-171, Cys-165–Cys-180, Cys-182–Cys-191, Cys-197–Cys-241, Cys-227–Cys-254, Cys-259–Cys-303, and Cys-289–Cys-316. Asn-60 and Asn-104 each carry an N-linked (GlcNAc...) asparagine glycan. Glu-118, Asn-120, Glu-126, Asn-143, and Asp-144 together coordinate Ca(2+). One can recognise an EGF-like domain in the interval 156-192 (YTASCQPWSCSGHGECVEIINNYTCNCDVGYYGPQCQ). The N-linked (GlcNAc...) asparagine glycan is linked to Asn-177. Sushi domains are found at residues 195–256 (IQCE…TCQV) and 257–318 (IQCE…ICQK). Asn-226, Asn-232, Asn-246, and Asn-271 each carry an N-linked (GlcNAc...) asparagine glycan. A helical membrane pass occupies residues 333 to 355 (PLFIPVAVIVTAFSGLAFIIWLA). Residues 356–372 (RRLKKGKKSKKSMDDPY) are Cytoplasmic-facing.

This sequence belongs to the selectin/LECAM family. In terms of assembly, interaction with SELPLG/PSGL1 and PODXL2 is required for promoting recruitment and rolling of leukocytes. This interaction is dependent on the sialyl Lewis X glycan modification of SELPLG and PODXL2, and tyrosine sulfation modifications of SELPLG. Sulfation on 'Tyr-51' of SELPLG is important for L-selectin binding. N-glycosylated.

It is found in the cell membrane. In terms of biological role, calcium-dependent lectin that mediates cell adhesion by binding to glycoproteins on neighboring cells. Mediates the adherence of lymphocytes to endothelial cells of high endothelial venules in peripheral lymph nodes. Promotes initial tethering and rolling of leukocytes in endothelia. The polypeptide is L-selectin (SELL) (Papio hamadryas (Hamadryas baboon)).